A 215-amino-acid polypeptide reads, in one-letter code: Large ribosomal subunit protein uL16 (215 aa).

Positions 1–22 are disordered; it reads MGRRPARCYRQPKGKPYPKSRY.

Belongs to the universal ribosomal protein uL16 family.

The sequence is that of Large ribosomal subunit protein uL16 (RPL10) from Tetrahymena thermophila (strain SB210).